A 255-amino-acid chain; its full sequence is TIR domain-containing protein (255 aa).

Residues 9–185 enclose the TIR domain; the sequence is LSDQVFINFR…DIVKEVKKQL (177 aa). Residue Glu83 is part of the active site. 2 helical membrane passes run 195 to 215 and 223 to 243; these read AIGVAFLAITINLIFSFFIAP and FFQTPEWFIGTLAVVLASWFW. One can recognise a KASH domain in the interval 201 to 255; the sequence is LAITINLIFSFFIAPKYLPDQKFFQTPEWFIGTLAVVLASWFWYKNNQNKAPPPS.

As to quaternary structure, forms homomers. Interacts with SUN1, SUN2, SUN3, SUN4 and SUN5.

It is found in the nucleus membrane. It carries out the reaction NAD(+) + H2O = ADP-D-ribose + nicotinamide + H(+). Its function is as follows. Could play a role in nuclear morphology, specifically nuclear size. In Arabidopsis thaliana (Mouse-ear cress), this protein is TIR domain-containing protein.